The primary structure comprises 114 residues: Ig kappa chain V region AH80-5 (114 aa).

The framework-1 stretch occupies residues 1–22 (IVMTQTPSSKSVPVGDTVTINC). The complementarity-determining-1 stretch occupies residues 23–35 (QAAQSVYSNNRLS). A framework-2 region spans residues 36-50 (WFQQKPGQPPKGLIY). A complementarity-determining-2 region spans residues 51–57 (YASTLAS). Residues 58-93 (GVQQDPSRFKGSGSGTQFTLTISDVQCBBAATVYYC) form a framework-3 region. A complementarity-determining-3 region spans residues 94-103 (QGYKSSDTRA). The segment at 104–113 (FGGGTEVVVK) is framework-4.

This Oryctolagus cuniculus (Rabbit) protein is Ig kappa chain V region AH80-5.